We begin with the raw amino-acid sequence, 159 residues long: Nascent polypeptide-associated complex subunit beta (159 aa).

Disordered regions lie at residues 1-39 (MDMEKLKRMQARGGVRTGDGKGTPRRKVKNVHKSTGMDD) and 124-159 (QSMQKAEGGEEKKDDEEDDDDIPDLVEGENFEDKVE). Over residues 23-32 (TPRRKVKNVH) the composition is skewed to basic residues. Residues 36–101 (GMDDKKLQTS…GEDKELTELV (66 aa)) enclose the NAC-A/B domain. Over residues 136–153 (KDDEEDDDDIPDLVEGEN) the composition is skewed to acidic residues.

Belongs to the NAC-beta family. In terms of assembly, part of the nascent polypeptide-associated complex (NAC), consisting of EGD2 and EGD1. NAC associates with ribosomes via EGD1.

It is found in the cytoplasm. Its subcellular location is the nucleus. Its function is as follows. Component of the nascent polypeptide-associated complex (NAC), a dynamic component of the ribosomal exit tunnel, protecting the emerging polypeptides from interaction with other cytoplasmic proteins to ensure appropriate nascent protein targeting. The NAC complex also promotes mitochondrial protein import by enhancing productive ribosome interactions with the outer mitochondrial membrane and blocks the inappropriate interaction of ribosomes translating non-secretory nascent polypeptides with translocation sites in the membrane of the endoplasmic reticulum. EGD1 may act as a transcription factor that exert a negative effect on the expression of several genes that are transcribed by RNA polymerase II. The polypeptide is Nascent polypeptide-associated complex subunit beta (egd1) (Sclerotinia sclerotiorum (strain ATCC 18683 / 1980 / Ss-1) (White mold)).